Here is an 88-residue protein sequence, read N- to C-terminus: Small ribosomal subunit protein uS17 (88 aa).

The protein belongs to the universal ribosomal protein uS17 family. As to quaternary structure, part of the 30S ribosomal subunit.

One of the primary rRNA binding proteins, it binds specifically to the 5'-end of 16S ribosomal RNA. The chain is Small ribosomal subunit protein uS17 from Azotobacter vinelandii (strain DJ / ATCC BAA-1303).